The sequence spans 162 residues: Nitric oxide synthase, inducible (162 aa).

The segment covering 24 to 37 has biased composition (polar residues); the sequence is LQYHSLSKQQNESP. The interval 24 to 65 is disordered; it reads LQYHSLSKQQNESPQPLVGTGKKSPESLVKPDATPLSSPRHV. Zn(2+) contacts are provided by Cys-90 and Cys-95. Ser-98 is a (6R)-L-erythro-5,6,7,8-tetrahydrobiopterin binding site. Position 132 (Glu-132) interacts with L-arginine. Residue His-160 participates in FAD binding.

This sequence belongs to the NOS family. As to quaternary structure, homodimer. Interacts with NHERF1. Interacts with GAPDH; induced by oxidatively-modified low-densitity lipoprotein (LDL(ox)). Interacts with S100A8 and S100A9 to form the iNOS-S100A8/9 transnitrosylase complex. Interacts with SPSB1, SPSB2 and SPSB4. Interacts with ELOC and CUL5 in the presence of SPSB1 or SPSB2 or SPSB4. Forms a complex with ASL, ASS1 and HSP90AA1; the complex regulates cell-autonomous L-arginine synthesis and citrulline recycling while channeling extracellular L-arginine to nitric oxide synthesis pathway. The cofactor is heme b. Requires FAD as cofactor. FMN serves as cofactor. (6R)-L-erythro-5,6,7,8-tetrahydrobiopterin is required as a cofactor. In terms of processing, polyubiquitinated; mediated by SPSB1, SPSB2 and SPSB4, leading to proteasomal degradation.

The protein resides in the cytoplasm. Its subcellular location is the cytosol. The enzyme catalyses 2 L-arginine + 3 NADPH + 4 O2 + H(+) = 2 L-citrulline + 2 nitric oxide + 3 NADP(+) + 4 H2O. With respect to regulation, regulated by calcium/calmodulin. Functionally, produces nitric oxide (NO) which is a messenger molecule with diverse functions throughout the body. In macrophages, NO mediates tumoricidal and bactericidal actions. Also has nitrosylase activity and mediates cysteine S-nitrosylation of cytoplasmic target proteins such PTGS2/COX2. As component of the iNOS-S100A8/9 transnitrosylase complex involved in the selective inflammatory stimulus-dependent S-nitrosylation of GAPDH implicated in regulation of the GAIT complex activity and probably multiple targets including ANXA5, EZR, MSN and VIM. Involved in inflammation, enhances the synthesis of pro-inflammatory mediators such as IL6 and IL8. This Macaca mulatta (Rhesus macaque) protein is Nitric oxide synthase, inducible (NOS2).